A 490-amino-acid polypeptide reads, in one-letter code: N-succinylglutamate 5-semialdehyde dehydrogenase (490 aa).

An NAD(+)-binding site is contributed by G224–G229. Catalysis depends on residues E247 and C281.

This sequence belongs to the aldehyde dehydrogenase family. AstD subfamily.

The enzyme catalyses N-succinyl-L-glutamate 5-semialdehyde + NAD(+) + H2O = N-succinyl-L-glutamate + NADH + 2 H(+). It functions in the pathway amino-acid degradation; L-arginine degradation via AST pathway; L-glutamate and succinate from L-arginine: step 4/5. In terms of biological role, catalyzes the NAD-dependent reduction of succinylglutamate semialdehyde into succinylglutamate. This chain is N-succinylglutamate 5-semialdehyde dehydrogenase, found in Hahella chejuensis (strain KCTC 2396).